Here is a 417-residue protein sequence, read N- to C-terminus: Sulfite reductase, dissimilatory-type subunit alpha (417 aa).

[4Fe-4S] cluster is bound by residues cysteine 170, cysteine 176, cysteine 214, cysteine 218, cysteine 264, cysteine 284, cysteine 287, and cysteine 290. Residue cysteine 218 coordinates siroheme.

It depends on [4Fe-4S] cluster as a cofactor. Siroheme serves as cofactor.

The catalysed reaction is [DsrC protein]-trisulfide + NAD(+) + 3 H2O = [DsrC protein]-dithiol + sulfite + NADH + 3 H(+). In terms of biological role, catalyzes the reduction of sulfite to sulfide. This is the terminal oxidation reaction in sulfate respiration. The polypeptide is Sulfite reductase, dissimilatory-type subunit alpha (dsrA) (Allochromatium vinosum (strain ATCC 17899 / DSM 180 / NBRC 103801 / NCIMB 10441 / D) (Chromatium vinosum)).